A 574-amino-acid polypeptide reads, in one-letter code: Acetolactate synthase large subunit (574 aa).

Glutamate 51 is a thiamine diphosphate binding site. FAD contacts are provided by residues arginine 153, 261–282 (HGTYEANMAMHYADVILAIGVR), and 304–323 (DIDPTSISKTITAHIPIVGN). The tract at residues 397–477 (QHQMFAALYY…ILILNLNNKS (81 aa)) is thiamine pyrophosphate binding. The Mg(2+) site is built by aspartate 448 and asparagine 475.

Belongs to the TPP enzyme family. Dimer of large and small chains. Mg(2+) is required as a cofactor. The cofactor is thiamine diphosphate.

The catalysed reaction is 2 pyruvate + H(+) = (2S)-2-acetolactate + CO2. It functions in the pathway amino-acid biosynthesis; L-isoleucine biosynthesis; L-isoleucine from 2-oxobutanoate: step 1/4. Its pathway is amino-acid biosynthesis; L-valine biosynthesis; L-valine from pyruvate: step 1/4. In Buchnera aphidicola subsp. Schlechtendalia chinensis, this protein is Acetolactate synthase large subunit (ilvI).